The following is a 492-amino-acid chain: Pre-mRNA-processing factor 19 (492 aa).

Residues 1 to 72 (MSFVCGISGE…APRNVSGTSI (72 aa)) form the U-box domain. WD repeat units lie at residues 207 to 246 (HSTGTPGITALDIKGNLSLTGGIDKTVVLYDYEKEQVMQT), 249 to 288 (GHNKKINAVVLHPDNITAISASADSHIRVWSATDSSSKAI), 291 to 330 (VHQAPVTDISLNASGDYILSASDDSYWAFSDIRSGKSLCK), 336 to 375 (GSQIAVHSIEFHPDGLIFGTGAADAVVKIWDLKNQTVAAA), 378 to 417 (GHTAAVRSIAFSENGYYLATGSEDGEVKLWDLRKLKNLKT), and 461 to 491 (DHSGPVTGVRFGENARSLVTCSLDKSLRVFS).

This sequence belongs to the WD repeat PRP19 family. As to quaternary structure, homotetramer. Component of the NTC complex (or PRP19-associated complex) which is associated with the spliceosome.

Its subcellular location is the nucleus. The protein localises to the nucleoplasm. It carries out the reaction S-ubiquitinyl-[E2 ubiquitin-conjugating enzyme]-L-cysteine + [acceptor protein]-L-lysine = [E2 ubiquitin-conjugating enzyme]-L-cysteine + N(6)-ubiquitinyl-[acceptor protein]-L-lysine.. The protein operates within protein modification; protein ubiquitination. In terms of biological role, probable ubiquitin-protein ligase which is mainly involved pre-mRNA splicing and DNA repair. Core component of the NTC/Nineteen complex which is part of the spliceosome and participates in its assembly, its remodeling and is required for its activity. Together with emb-4, necessary for interaction of rnp-4, a probable exon junction complex component, with mRNAs and spliceosomal snRNAs. Plays a role in nuclear retention of unspliced mRNAs. This chain is Pre-mRNA-processing factor 19 (prp-19), found in Caenorhabditis elegans.